Here is a 552-residue protein sequence, read N- to C-terminus: Putative pentatricopeptide repeat-containing protein At1g64310 (552 aa).

PPR repeat units follow at residues 39–69 (DPYFATQLARFYALNDDLISARKLFDVFPER), 70–104 (SVFLWNSIIRAYAKAHQFTTVLSLFSQILRSDTRP), 105–139 (DNFTYACLARGFSESFDTKGLRCIHGIAIVSGLGF), 140–170 (DQICGSAIVKAYSKAGLIVEASKLFCSIPDP), 171–205 (DLALWNVMILGYGCCGFWDKGINLFNLMQHRGHQP), 206–240 (NCYTMVALTSGLIDPSLLLVAWSVHAFCLKINLDS), 241–271 (HSYVGCALVNMYSRCMCIASACSVFNSISEP), 272–306 (DLVACSSLITGYSRCGNHKEALHLFAELRMSGKKP), 307–341 (DCVLVAIVLGSCAELSDSVSGKEVHSYVIRLGLEL), 342–372 (DIKVCSALIDMYSKCGLLKCAMSLFAGIPEK), 373–407 (NIVSFNSLILGLGLHGFASTAFEKFTEILEMGLIP), 408–438 (DEITFSALLCTCCHSGLLNKGQEIFERMKSE), and 444–474 (QTEHYVYMVKLMGMAGKLEEAFEFVMSLQKP). A type E motif; degenerate region spans residues 479 to 552 (ILGALLSCCE…GGKLPGISWF (74 aa)).

Belongs to the PPR family. PCMP-E subfamily.

In Arabidopsis thaliana (Mouse-ear cress), this protein is Putative pentatricopeptide repeat-containing protein At1g64310 (PCMP-E65).